Consider the following 237-residue polypeptide: Uridylate kinase (237 aa).

9–12 (KLSG) serves as a coordination point for ATP. Glycine 51 lines the UMP pocket. The ATP site is built by glycine 52 and arginine 56. UMP contacts are provided by residues aspartate 71 and 132–139 (CGNPFFTT). ATP contacts are provided by threonine 159, tyrosine 165, and aspartate 168.

Belongs to the UMP kinase family. In terms of assembly, homohexamer.

It localises to the cytoplasm. It catalyses the reaction UMP + ATP = UDP + ADP. It functions in the pathway pyrimidine metabolism; CTP biosynthesis via de novo pathway; UDP from UMP (UMPK route): step 1/1. Its activity is regulated as follows. Inhibited by UTP. Catalyzes the reversible phosphorylation of UMP to UDP. The chain is Uridylate kinase from Prochlorococcus marinus (strain MIT 9313).